Reading from the N-terminus, the 121-residue chain is Small ribosomal subunit protein uS13 (121 aa).

The tract at residues 95 to 121 (LPVRGQNTKNNARTRKGKAVAIAGKKK) is disordered. Residues 106-121 (ARTRKGKAVAIAGKKK) show a composition bias toward basic residues.

The protein belongs to the universal ribosomal protein uS13 family. Part of the 30S ribosomal subunit. Forms a loose heterodimer with protein S19. Forms two bridges to the 50S subunit in the 70S ribosome.

Functionally, located at the top of the head of the 30S subunit, it contacts several helices of the 16S rRNA. In the 70S ribosome it contacts the 23S rRNA (bridge B1a) and protein L5 of the 50S subunit (bridge B1b), connecting the 2 subunits; these bridges are implicated in subunit movement. Contacts the tRNAs in the A and P-sites. The polypeptide is Small ribosomal subunit protein uS13 (Streptococcus equi subsp. zooepidemicus (strain H70)).